The sequence spans 253 residues: MSRRRRVYEGKAKVLYEGPEPGTLIQHFKDDATAFDAQKRATIEGKGVLNNRISEFIFTRLNEIGVPTHFIRALNMREQLIREVEIIPCEVVVRNVAAGSLSKRLGIDEGTVLPRSIIEFYYKNDELHDPMVSEEHITAFGWATPQEIDDMMALALRINDFLTGLFLGIGIRLVDFKVEFGRLYEGEMVRVVLADEISPDCCRLWDTRTNDKMDKDRFRRDMGGLIEAYSEVARRLGILFENEPKRSGPKLVK.

It belongs to the SAICAR synthetase family.

It catalyses the reaction 5-amino-1-(5-phospho-D-ribosyl)imidazole-4-carboxylate + L-aspartate + ATP = (2S)-2-[5-amino-1-(5-phospho-beta-D-ribosyl)imidazole-4-carboxamido]succinate + ADP + phosphate + 2 H(+). Its pathway is purine metabolism; IMP biosynthesis via de novo pathway; 5-amino-1-(5-phospho-D-ribosyl)imidazole-4-carboxamide from 5-amino-1-(5-phospho-D-ribosyl)imidazole-4-carboxylate: step 1/2. In Parvibaculum lavamentivorans (strain DS-1 / DSM 13023 / NCIMB 13966), this protein is Phosphoribosylaminoimidazole-succinocarboxamide synthase.